Here is a 33-residue protein sequence, read N- to C-terminus: Cysteine-rich venom protein (33 aa).

The disordered stretch occupies residues 1–33; that stretch reads NVDFNSESTRRKKKQKEIVDLHNSLRRRVSPTA. Residues 24-33 show a composition bias toward basic residues; sequence SLRRRVSPTA.

The protein belongs to the CRISP family. In terms of processing, contains 8 disulfide bonds. As to expression, expressed by the venom gland.

It is found in the secreted. Functionally, blocks contraction of smooth muscle elicited by high potassium-induced depolarization, but does not block caffeine-stimulated contraction. May target voltage-gated calcium channels on smooth muscle (Cav). This Naja naja (Indian cobra) protein is Cysteine-rich venom protein.